Here is a 647-residue protein sequence, read N- to C-terminus: LIM domain kinase 1 (647 aa).

2 LIM zinc-binding domains span residues 25–75 and 84–137; these read CASC…CKKD and CHGC…CGQC. In terms of domain architecture, PDZ spans 165–258; it reads LVSIPASAHG…LLQLTLEHDP (94 aa). Residue Ser-210 is modified to Phosphoserine. Residue Thr-229 is modified to Phosphothreonine. Positions 256 to 316 are disordered; the sequence is HDPHDSLGHG…SLVSPASQRK (61 aa). Residues 278–289 show a composition bias toward polar residues; sequence HTPSGQAGSSAR. Ser-298, Ser-302, Ser-307, and Ser-310 each carry phosphoserine. Ser-323 carries the phosphoserine; by MAPKAPK2 modification. Ser-337 carries the post-translational modification Phosphoserine. One can recognise a Protein kinase domain in the interval 339 to 604; the sequence is LIHGEVLGKG…PSFVKLEQWL (266 aa). ATP is bound by residues 345–353 and Lys-368; that span reads LGKGCFGQA. Asp-460 is an active-site residue. Phosphothreonine; by ROCK1 and PAK1 is present on Thr-508.

Belongs to the protein kinase superfamily. TKL Ser/Thr protein kinase family. Interacts (via LIM domain) with the cytoplasmic domain of NRG1. Interacts with NISCH. Interacts with RLIM and RNF6. Self-associates to form homodimers. Interacts with HSP90AA1; this interaction promotes LIMK1 dimerization and subsequent transphosphorylation. Interacts with CDKN1C. Interacts with SSH1. Interacts with ROCK1. Interacts (via LIM zinc-binding domains) with FAM89B/LRAP25 (via LRR repeat). Forms a tripartite complex with CDC42BPA, CDC42BPB and FAM89B/LRAP25. In terms of processing, autophosphorylated. Phosphorylated on Thr-508 by ROCK1 and PAK1, resulting in activation. Phosphorylated by PAK4 which increases the ability of LIMK1 to phosphorylate cofilin. Phosphorylated at Ser-323 by MAPKAPK2 during activation of VEGFA-induced signaling, which results in activation of LIMK1 and promotion of actin reorganization, cell migration, and tubule formation of endothelial cells. Dephosphorylated and inactivated by SSH1. Phosphorylated by CDC42BP. Ubiquitinated. 'Lys-48'-linked polyubiquitination by RNF6 leads to proteasomal degradation through the 26S proteasome, modulating LIMK1 levels in the growth cone and its effect on axonal outgrowth. Also polyubiquitinated by RLIM.

Its subcellular location is the cytoplasm. It localises to the nucleus. The protein resides in the cytoskeleton. The protein localises to the cell projection. It is found in the lamellipodium. It carries out the reaction L-seryl-[protein] + ATP = O-phospho-L-seryl-[protein] + ADP + H(+). The catalysed reaction is L-threonyl-[protein] + ATP = O-phospho-L-threonyl-[protein] + ADP + H(+). Its function is as follows. Serine/threonine-protein kinase that plays an essential role in the regulation of actin filament dynamics. Acts downstream of several Rho family GTPase signal transduction pathways. Activated by upstream kinases including ROCK1, PAK1 and PAK4, which phosphorylate LIMK1 on a threonine residue located in its activation loop. LIMK1 subsequently phosphorylates and inactivates the actin binding/depolymerizing factors cofilin-1/CFL1, cofilin-2/CFL2 and destrin/DSTN, thereby preventing the cleavage of filamentous actin (F-actin), and stabilizing the actin cytoskeleton. In this way LIMK1 regulates several actin-dependent biological processes including cell motility, cell cycle progression, and differentiation. Phosphorylates TPPP on serine residues, thereby promoting microtubule disassembly. Stimulates axonal outgrowth and may be involved in brain development. The polypeptide is LIM domain kinase 1 (Limk1) (Rattus norvegicus (Rat)).